The chain runs to 354 residues: P2Y purinoceptor 13 (354 aa).

Over 1–49 (MTAAIRRQRELSILPKVTLEAMNTTVMQGFNRSERCPRDTRIVQLVFPA) the chain is Extracellular. Asn23 and Asn31 each carry an N-linked (GlcNAc...) asparagine glycan. Residues 50–70 (LYTVVFLTGILLNTLALWVFV) traverse the membrane as a helical segment. Over 71-77 (HIPSSST) the chain is Cytoplasmic. A helical membrane pass occupies residues 78 to 98 (FIIYLKNTLVADLIMTLMLPF). The Extracellular segment spans residues 99-117 (KILSDSHLAPWQLRAFVCR). Cys116 and Cys194 are disulfide-bonded. Residues 118 to 138 (FSSVIFYETMYVGIVLLGLIA) form a helical membrane-spanning segment. Residues 139–161 (FDRFLKIIRPLRNIFLKKPVFAK) are Cytoplasmic-facing. Residues 162–182 (TVSIFIWFFLFFISLPNTILS) form a helical membrane-spanning segment. Over 183 to 211 (NKEATPSSVKKCASLKGPLGLKWHQMVNN) the chain is Extracellular. A helical membrane pass occupies residues 212-232 (ICQFIFWTVFILMLVFYVVIA). Over 233–252 (KKVYDSYRKSKSKDRKNNKK) the chain is Cytoplasmic. Residues 253-273 (LEGKVFVVVAVFFVCFAPFHF) traverse the membrane as a helical segment. The Extracellular portion of the chain corresponds to 274 to 300 (ARVPYTHSQTNNKTDCRLQNQLFIAKE). Asn285 carries an N-linked (GlcNAc...) asparagine glycan. A helical membrane pass occupies residues 301 to 321 (TTLFLAATNICMDPLIYIFLC). Over 322–333 (KKFTEKLPCMQG) the chain is Cytoplasmic. Residues 335–354 (KTTASSQENHSSQTDNITLG) form a disordered region.

This sequence belongs to the G-protein coupled receptor 1 family. In terms of tissue distribution, strong expression in spleen and adult brain. Lower expression in placenta, lung, liver, spinal cord, thymus, small intestine, uterus, stomach, testis, fetal brain, and adrenal gland. Not detected in pancreas, heart, kidney, skeletal muscle, ovary or fetal aorta. Clearly detected in lymph node and bone marrow, weakly detected in peripheral blood mononuclear cells (PBMC) and in peripheral blood leukocytes (PBL), but not detected in polymorphonuclear cells (PMN). In the brain, detected in all brain regions examined.

The protein localises to the cell membrane. Functionally, receptor for ADP. Coupled to G(i)-proteins. May play a role in hematopoiesis and the immune system. The chain is P2Y purinoceptor 13 (P2RY13) from Homo sapiens (Human).